A 182-amino-acid chain; its full sequence is CD-NTase-associated protein 15 (182 aa).

2 consecutive transmembrane segments (helical) span residues 11–31 and 33–53; these read ITGWFTVIFFLLLIIVSCTVW and IGWIDIISYTVTISTFITIGY.

It belongs to the CBASS Cap15 membrane effector family. The beta barrel domain oligomerizes; in the presence of cyclic nucleotides (probably 3',2'-cGAMP) higher-level oligomers occur.

Its subcellular location is the cell membrane. Functionally, effector protein of a CBASS antivirus system. CBASS (cyclic oligonucleotide-based antiphage signaling system) provides immunity against bacteriophage. The CD-NTase protein (CdnE) synthesizes cyclic nucleotides in response to infection; these serve as specific second messenger signals. The signals activate a diverse range of effectors, leading to bacterial cell death and thus abortive phage infection. This system triggers membrane disruption without lysis. A type I-B CBASS system. Binds cyclic nucleotide second messenger 3',2'-cGAMP, probably oligomerizing, and induces cell membrane shrinkage and rupture, leading to cell death. Its function is as follows. Protects S.aureus against phage infection. When the CBASS operon (cdnE-cap15) is introduced in S.aureus strain RN4220 there is strong protection against lytic DNA phages 80alpha-vir and phi-NM1-gamma-6 but little to no protection against phages phi-NM4-gamma-4 or phi-12-gamma-3. The polypeptide is CD-NTase-associated protein 15 (Staphylococcus schleiferi).